A 310-amino-acid polypeptide reads, in one-letter code: Olfactory receptor 2A12 (310 aa).

The Extracellular segment spans residues 1-24; sequence MESNQTWITEVILLGFQVDPALEL. Asn4 is a glycosylation site (N-linked (GlcNAc...) asparagine). The helical transmembrane segment at 25–48 threads the bilayer; that stretch reads FLFGFFLLFYSLTLMGNGIILGLI. Topologically, residues 49 to 56 are cytoplasmic; it reads YLDSRLHT. Residues 57 to 78 form a helical membrane-spanning segment; that stretch reads PMYVFLSHLAIVDMSYASSTVP. Over 79–99 the chain is Extracellular; that stretch reads KMLANLVMHKKVISFAPCILQ. Cys96 and Cys188 are oxidised to a cystine. Residues 100-119 form a helical membrane-spanning segment; the sequence is TFLYLAFAITECLILVMMCY. At 120–138 the chain is on the cytoplasmic side; it reads DRYVAICHPLQYTLIMNWR. The chain crosses the membrane as a helical span at residues 139-157; sequence VCTVLASTCWIFSFLLALV. Residues 158-194 lie on the Extracellular side of the membrane; it reads HITLILRLPFCGPQKINHFFCQIMSVFKLACADTRLN. The chain crosses the membrane as a helical span at residues 195–218; it reads QVVLFAGSAFILVGPLCLVLVSYL. At 219-235 the chain is on the cytoplasmic side; that stretch reads HILVAILRIQSGEGRRK. The chain crosses the membrane as a helical span at residues 236–258; that stretch reads AFSTCSSHLCVVGLFFGSAIVMY. Residues 259-271 lie on the Extracellular side of the membrane; the sequence is MAPKSSHSQERRK. Residues 272 to 291 form a helical membrane-spanning segment; it reads ILSLFYSLFNPILNPLIYSL. At 292 to 310 the chain is on the cytoplasmic side; that stretch reads RNAEVKGALKRVLWKQRSM.

It belongs to the G-protein coupled receptor 1 family.

Its subcellular location is the cell membrane. Odorant receptor. The sequence is that of Olfactory receptor 2A12 (OR2A12) from Homo sapiens (Human).